The chain runs to 376 residues: Transcription initiation factor IIA subunit 1 (376 aa).

A2 carries the post-translational modification N-acetylalanine. Low complexity-rich tracts occupy residues 69-79 (QVQQQHQPQQQ) and 89-105 (QAQP…TQQV). Disordered stretches follow at residues 69-107 (QVQQ…QVLI), 247-266 (QAQI…AQTQ), and 274-329 (DGTG…QELF). 4 positions are modified to phosphoserine; by TAF1: S280, S281, S316, and S321. A compositionally biased stretch (acidic residues) spans 280 to 329 (SSEEDEDEEEDYDDDEEEDKEKDGAEDGQVEEEPLNSEDDVSDEEGQELF). Positions 343 and 344 each coordinate DNA.

Belongs to the TFIIA subunit 1 family. As to quaternary structure, TFIIA is a heterodimer of the large unprocessed subunit 1 and a small subunit gamma. It was originally believed to be a heterotrimer of an alpha (p35), a beta (p19) and a gamma subunit (p12). TFIIA forms a complex with TBP. Part of TBP-based Pol II pre-initiation complex (PIC), in which Pol II core assembles with general transcription factors and other specific initiation factors including GTF2E1, GTF2E2, GTF2F1, GTF2F2, TCEA1, ERCC2, ERCC3, GTF2H2, GTF2H3, GTF2H4, GTF2H5, GTF2A1, GTF2A2, GTF2B and TBP; this large multi-subunit PIC complex mediates DNA unwinding and targets Pol II core to the transcription start site where the first phosphodiester bond forms. Post-translationally, the alpha and beta subunits are postranslationally produced from the precursor form by TASP1. The cleavage promotes proteasomal degradation.

The protein resides in the nucleus. Its function is as follows. TFIIA is a component of the transcription machinery of RNA polymerase II and plays an important role in transcriptional activation. TFIIA in a complex with TBP mediates transcriptional activity. The sequence is that of Transcription initiation factor IIA subunit 1 (GTF2A1) from Homo sapiens (Human).